Consider the following 62-residue polypeptide: Photosystem II reaction center protein Z (62 aa).

2 helical membrane-spanning segments follow: residues 8-28 and 41-61; these read AVFA…VALA and FSGV…NSFI.

The protein belongs to the PsbZ family. In terms of assembly, PSII is composed of 1 copy each of membrane proteins PsbA, PsbB, PsbC, PsbD, PsbE, PsbF, PsbH, PsbI, PsbJ, PsbK, PsbL, PsbM, PsbT, PsbY, PsbZ, Psb30/Ycf12, at least 3 peripheral proteins of the oxygen-evolving complex and a large number of cofactors. It forms dimeric complexes.

The protein localises to the plastid. The protein resides in the chloroplast thylakoid membrane. Functionally, may control the interaction of photosystem II (PSII) cores with the light-harvesting antenna, regulates electron flow through the 2 photosystem reaction centers. PSII is a light-driven water plastoquinone oxidoreductase, using light energy to abstract electrons from H(2)O, generating a proton gradient subsequently used for ATP formation. The polypeptide is Photosystem II reaction center protein Z (Pinus thunbergii (Japanese black pine)).